The following is a 356-amino-acid chain: Probable butyrate kinase (356 aa).

Belongs to the acetokinase family.

It is found in the cytoplasm. The catalysed reaction is butanoate + ATP = butanoyl phosphate + ADP. This Coprothermobacter proteolyticus (strain ATCC 35245 / DSM 5265 / OCM 4 / BT) protein is Probable butyrate kinase.